Here is a 487-residue protein sequence, read N- to C-terminus: MILKILNEIASIGSTKQKQAILEKNKDNELLKRVYRLTYSRGLQYYIKKWPKPGIATQSFGMLTLTDMLDFIEFTLATRKLTGNAAIEELTGYITDGKKDDVEVLRRVMMRDLECGASVSIANKVWPGLIPEQPQMLASSYDEKGINKNIKFPAFAQLKADGARCFAEVRGDELDDVRLLSRAGNEYLGLDLLKEELIKMTAEARQIHPEGVLIDGELVYHEQVKKEPEGLDFLFDAHPENSKVKDFTEVAESRTASNGIANKSLKGTISEKEAQCMKFQVWDYVPLVEVYGLPAFRLKYDVRFSKLEQMTSGYDKVILIENQVVNNLDEAKVIYKKYIDQGLEGIILKNIDGLWENARSKNLYKFKEVIDVDLKIVGIYPHRKDPTKAGGFILESECGKIKVNAGSGLKDKAGVKSHELDRTRIMENQNYYIGKILECECNGWLKSDGRTDYVKLFLPIAIRLREDKTKANTFEDVFGDFHEVTGL.

The active-site N6-AMP-lysine intermediate is the Lys159. Positions 164, 182, and 217 each coordinate ATP. Position 217 (Glu217) interacts with a divalent metal cation. Residues 229–237 form an interaction with the sliding clamp region; it reads EGLDFLFDA. Residue Glu344 coordinates a divalent metal cation. Arg359 and Lys365 together coordinate ATP.

The protein belongs to the ATP-dependent DNA ligase family. In terms of assembly, interacts with the sliding clamp. It depends on a divalent metal cation as a cofactor.

It catalyses the reaction ATP + (deoxyribonucleotide)n-3'-hydroxyl + 5'-phospho-(deoxyribonucleotide)m = (deoxyribonucleotide)n+m + AMP + diphosphate.. Functionally, DNA ligase, which is expressed in the early stage of lytic development, has been implicated in T4 DNA synthesis and genetic recombination. It may also play a role in T4 DNA repair. The polypeptide is DNA ligase (30) (Escherichia coli (Bacteriophage T6)).